The following is a 244-amino-acid chain: Probable transcriptional regulatory protein DR_2548 (244 aa).

Residues 1 to 23 are disordered; the sequence is MAGHSKWAQIKRKKGANDKKRSA.

This sequence belongs to the TACO1 family.

It localises to the cytoplasm. In Deinococcus radiodurans (strain ATCC 13939 / DSM 20539 / JCM 16871 / CCUG 27074 / LMG 4051 / NBRC 15346 / NCIMB 9279 / VKM B-1422 / R1), this protein is Probable transcriptional regulatory protein DR_2548.